We begin with the raw amino-acid sequence, 556 residues long: Formate--tetrahydrofolate ligase (556 aa).

Position 65-72 (65-72 (TSAGEGKT)) interacts with ATP.

This sequence belongs to the formate--tetrahydrofolate ligase family.

The enzyme catalyses (6S)-5,6,7,8-tetrahydrofolate + formate + ATP = (6R)-10-formyltetrahydrofolate + ADP + phosphate. It functions in the pathway one-carbon metabolism; tetrahydrofolate interconversion. This Kosmotoga olearia (strain ATCC BAA-1733 / DSM 21960 / TBF 19.5.1) protein is Formate--tetrahydrofolate ligase.